The primary structure comprises 86 residues: Small ribosomal subunit protein uS17 (86 aa).

Belongs to the universal ribosomal protein uS17 family. Part of the 30S ribosomal subunit.

One of the primary rRNA binding proteins, it binds specifically to the 5'-end of 16S ribosomal RNA. The protein is Small ribosomal subunit protein uS17 of Streptococcus mutans serotype c (strain ATCC 700610 / UA159).